The chain runs to 930 residues: Translation initiation factor IF-2 (930 aa).

Positions 51–325 (PGAGKSAAKP…TREIGGVKVP (275 aa)) are disordered. 2 stretches are compositionally biased toward low complexity: residues 56 to 111 (SAAK…KPGV) and 121 to 162 (TPAA…GNNP). Gly residues predominate over residues 263–295 (RPGGGPGGGPGRPGGPGGRGGRGNAQGAFGRGG). The segment covering 296–307 (GPRKGRKSKRAK) has biased composition (basic residues). Residues 308–320 (RQEFEQQHTREIG) are compositionally biased toward basic and acidic residues. Positions 422–596 (PRPAVVTVMG…LTADAALELT (175 aa)) constitute a tr-type G domain. A G1 region spans residues 431–438 (GHVDHGKT). Residue 431 to 438 (GHVDHGKT) coordinates GTP. The interval 456–460 (GITQH) is G2. The interval 481–484 (DTPG) is G3. GTP-binding positions include 481-485 (DTPGH) and 535-538 (NKID). The segment at 535 to 538 (NKID) is G4. The segment at 571–573 (SAR) is G5.

Belongs to the TRAFAC class translation factor GTPase superfamily. Classic translation factor GTPase family. IF-2 subfamily.

Its subcellular location is the cytoplasm. Functionally, one of the essential components for the initiation of protein synthesis. Protects formylmethionyl-tRNA from spontaneous hydrolysis and promotes its binding to the 30S ribosomal subunits. Also involved in the hydrolysis of GTP during the formation of the 70S ribosomal complex. The sequence is that of Translation initiation factor IF-2 from Micrococcus luteus (strain ATCC 4698 / DSM 20030 / JCM 1464 / CCM 169 / CCUG 5858 / IAM 1056 / NBRC 3333 / NCIMB 9278 / NCTC 2665 / VKM Ac-2230) (Micrococcus lysodeikticus).